Consider the following 112-residue polypeptide: Integration host factor subunit alpha (112 aa).

Belongs to the bacterial histone-like protein family. As to quaternary structure, heterodimer of an alpha and a beta chain.

Its function is as follows. This protein is one of the two subunits of integration host factor, a specific DNA-binding protein that functions in genetic recombination as well as in transcriptional and translational control. This is Integration host factor subunit alpha from Rhizobium etli (strain ATCC 51251 / DSM 11541 / JCM 21823 / NBRC 15573 / CFN 42).